The sequence spans 242 residues: MDQVQFDFDSKSSCSTQTRHSANIFNKTNNMIYNNQLGTPPALPSPDYDYRMDYFHYKPVSGDVRDESADMVEAEYVDCDLKPKLSVDVNTFGGNQQFISPIELGEYKKFTPNTNPYNFLLVDDNFINLKILERVLLKLYPNCTIVKTQDSTKIMALLHSQTFDVAFLDIEMPGLTGIELAKMIRMEDKLNQVGIIAVTTKSLPCDKIIYEQAGIDHTFAKPLNYSFDHIITCIEKVLRAKI.

Positions 118–236 (NFLLVDDNFI…FDHIITCIEK (119 aa)) constitute a Response regulatory domain. 4-aspartylphosphate is present on D169.

Required for stress adaptation, morphogenesis and virulence. The protein is Stress response regulator protein 1 (SRR1) of Debaryomyces hansenii (strain ATCC 36239 / CBS 767 / BCRC 21394 / JCM 1990 / NBRC 0083 / IGC 2968) (Yeast).